The chain runs to 909 residues: Protein NLP1 (909 aa).

4 disordered regions span residues Lys-51 to Pro-71, Lys-536 to Asn-556, Ala-568 to Thr-605, and Asn-690 to Gly-745. Residues Gln-55 to Ser-70 are compositionally biased toward polar residues. In terms of domain architecture, RWP-RK spans Arg-595–Ser-676. Residues Asn-690–Asn-716 show a composition bias toward polar residues. Positions Arg-725–Gly-745 are enriched in low complexity. One can recognise a PB1 domain in the interval Ala-811–Ala-894.

It localises to the nucleus. Its function is as follows. Probable transcription factor. This Arabidopsis thaliana (Mouse-ear cress) protein is Protein NLP1 (NLP1).